Reading from the N-terminus, the 564-residue chain is MFS-type transporter astH (564 aa).

Residue Asn23 is glycosylated (N-linked (GlcNAc...) asparagine). A disordered region spans residues Lys26–Ser59. The span at Gln43–Val53 shows a compositional bias: polar residues. 4 consecutive transmembrane segments (helical) span residues Leu69 to Ile89, Asp106 to Gly126, Gly143 to Ile163, and Gly197 to Phe217. A glycan (N-linked (GlcNAc...) asparagine) is linked at Asn220. 6 consecutive transmembrane segments (helical) span residues Trp225–Phe245, Leu266–Gly286, Ile297–Trp317, Leu339–Phe359, Leu375–Leu395, and Gly396–Leu416. A glycan (N-linked (GlcNAc...) asparagine) is linked at Asn425. 2 helical membrane-spanning segments follow: residues Thr461 to Gly481 and Phe537 to Ile557.

It belongs to the major facilitator superfamily. TCR/Tet family.

The protein resides in the membrane. Its function is as follows. MFS-type transporter; part of the gene cluster that mediates the biosynthesis of astellolides, drimane-type sesquiterpene esters that show antimicrobial, anti-inflammatory, and anti-tumor activities. Seems not to be involved in astellolides translocation. The chain is MFS-type transporter astH from Aspergillus oryzae (strain ATCC 42149 / RIB 40) (Yellow koji mold).